A 724-amino-acid polypeptide reads, in one-letter code: Protein Aster-A (724 aa).

The segment covering 1–18 (MFDTTPHSGRSTPSSSPS) has biased composition (low complexity). Residues 1–66 (MFDTTPHSGR…TPSTQSLGSR (66 aa)) are disordered. Positions 57-66 (TPSTQSLGSR) are enriched in polar residues. Residues 91–158 (EDFRKLFSKL…KEVTCLKKEK (68 aa)) form the GRAM domain. The disordered stretch occupies residues 256-336 (SSGAADRSQE…GPTTLGPLDL (81 aa)). 3 positions are modified to phosphoserine: serine 263, serine 267, and serine 271. Over residues 300–312 (DSQPDASSSQTVT) the composition is skewed to polar residues. The span at 326 to 336 (DGPTTLGPLDL) shows a compositional bias: low complexity. The 172-residue stretch at 367–538 (SGRLLINSVF…ELAKAEKLSL (172 aa)) folds into the VASt domain. Phosphoserine is present on serine 415. Residues 560 to 579 (SWRAHGDGPQHPDPDPCARA) are disordered. Basic and acidic residues predominate over residues 563-575 (AHGDGPQHPDPDP). A helical membrane pass occupies residues 610-630 (LISIVICVSLIILIALNVLLF).

In terms of tissue distribution, expressed in liver.

It is found in the endoplasmic reticulum membrane. The protein localises to the cell membrane. Its subcellular location is the cytoplasmic vesicle. It localises to the autophagosome. Functionally, cholesterol transporter that mediates non-vesicular transport of cholesterol from the plasma membrane (PM) to the endoplasmic reticulum (ER). Contains unique domains for binding cholesterol and the PM, thereby serving as a molecular bridge for the transfer of cholesterol from the PM to the ER. Plays a crucial role in cholesterol homeostasis and has the unique ability to localize to the PM based on the level of membrane cholesterol. In lipid-poor conditions localizes to the ER membrane and in response to excess cholesterol in the PM is recruited to the endoplasmic reticulum-plasma membrane contact sites (EPCS) which is mediated by the GRAM domain. At the EPCS, the sterol-binding VASt/ASTER domain binds to the cholesterol in the PM and facilitates its transfer from the PM to ER. May play a role in tumor progression. Plays a role in autophagy regulation and is required for biogenesis of the autophagosome. This function in autophagy requires its cholesterol-transfer activity. The chain is Protein Aster-A from Homo sapiens (Human).